Reading from the N-terminus, the 338-residue chain is Oligopeptide transport ATP-binding protein OppD (338 aa).

In terms of domain architecture, ABC transporter spans 7-257; that stretch reads LEAKQVSVAF…PKHPYTRSLL (251 aa). 43 to 50 provides a ligand contact to ATP; it reads GESGSGKS.

It belongs to the ABC transporter superfamily. The complex is composed of two ATP-binding proteins (OppD and OppF), two transmembrane proteins (OppB and OppC) and a solute-binding protein (OppA).

Its subcellular location is the cell membrane. The enzyme catalyses a [peptide](out) + ATP + H2O = a [peptide](in) + ADP + phosphate + H(+). Functionally, part of the ABC transporter complex OppABCDF involved in the uptake of oligopeptides. Probably responsible for energy coupling to the transport system. Essential for uptake of peptides larger than three amino acids and for growth in milk. The protein is Oligopeptide transport ATP-binding protein OppD of Lactococcus lactis subsp. cremoris (strain SK11).